Here is a 227-residue protein sequence, read N- to C-terminus: Uridylate kinase (227 aa).

Gly-11–Ser-12 lines the ATP pocket. Gly-45 is a UMP binding site. The ATP site is built by Gly-46 and Arg-50. UMP-binding positions include Asp-67 and Thr-114–Thr-120. ATP-binding residues include Thr-140, Tyr-146, and Asp-149.

The protein belongs to the UMP kinase family. In terms of assembly, homohexamer.

The protein localises to the cytoplasm. It carries out the reaction UMP + ATP = UDP + ADP. The protein operates within pyrimidine metabolism; CTP biosynthesis via de novo pathway; UDP from UMP (UMPK route): step 1/1. With respect to regulation, inhibited by UTP. In terms of biological role, catalyzes the reversible phosphorylation of UMP to UDP. The polypeptide is Uridylate kinase (Thermoplasma volcanium (strain ATCC 51530 / DSM 4299 / JCM 9571 / NBRC 15438 / GSS1)).